Here is a 236-residue protein sequence, read N- to C-terminus: Ribose-5-phosphate isomerase (236 aa).

Residues T27–T30, D84–D87, and K97–G100 each bind substrate. Catalysis depends on E106, which acts as the Proton acceptor. K124 serves as a coordination point for substrate.

Belongs to the ribose 5-phosphate isomerase family. In terms of assembly, homodimer.

It catalyses the reaction aldehydo-D-ribose 5-phosphate = D-ribulose 5-phosphate. It participates in carbohydrate degradation; pentose phosphate pathway; D-ribose 5-phosphate from D-ribulose 5-phosphate (non-oxidative stage): step 1/1. In terms of biological role, involved in the first step of the non-oxidative branch of the pentose phosphate pathway. It catalyzes the reversible conversion of ribose-5-phosphate to ribulose 5-phosphate. The chain is Ribose-5-phosphate isomerase from Plasmodium falciparum (isolate 3D7).